The following is a 481-amino-acid chain: uncharacterized protein (481 aa).

The next 11 membrane-spanning stretches (helical) occupy residues 14–34, 46–66, 90–110, 134–154, 167–187, 218–238, 258–278, 303–323, 377–397, 411–431, and 446–466; these read LGFCSVVMLGINSIIGAGIFL, FAPMAYVLAGIFAGVVAIVFA, IGIYVGVTHAITASIAWGVLA, FSVKTLTFLGFIGVLLAINLF, TVGKAFALSAFIVGGLWIITT, FSSMALATIVALYAFTGFESI, IAIFSVGAIYLLTLTVAMLLG, IIVVGALISMFGINVAASFGA, LAVIARFVQFIIVPIALIALA, AFTDKVLPLVAIVVSVGLAVS, and YFSIALIVITFIVVPAMAYLH.

This sequence belongs to the amino acid-polyamine-organocation (APC) superfamily.

The protein resides in the cell membrane. Probable amino-acid or metabolite transport protein. This is an uncharacterized protein from Mycobacterium tuberculosis (strain CDC 1551 / Oshkosh).